Reading from the N-terminus, the 369-residue chain is Glycerol-3-phosphate dehydrogenase [NAD(P)+] (369 aa).

Positions 6, 7, 27, 28, and 101 each coordinate NADPH. Residues Lys101 and Gly131 each contribute to the sn-glycerol 3-phosphate site. Ala135 serves as a coordination point for NADPH. Lys186, Asp239, Ser249, Arg250, and Asn251 together coordinate sn-glycerol 3-phosphate. The active-site Proton acceptor is the Lys186. Residue Arg250 coordinates NADPH. Glu276 contacts NADPH. The disordered stretch occupies residues 312 to 369 (KDIAPHLTTDDEPQGERTRGERTTDDGQGQGRTSVWGSLKRAFDQLRDGGGSSRRDRP). Basic and acidic residues-rich tracts occupy residues 325–336 (QGERTRGERTTD) and 352–369 (RAFD…RDRP).

This sequence belongs to the NAD-dependent glycerol-3-phosphate dehydrogenase family.

It localises to the cytoplasm. It catalyses the reaction sn-glycerol 3-phosphate + NAD(+) = dihydroxyacetone phosphate + NADH + H(+). It carries out the reaction sn-glycerol 3-phosphate + NADP(+) = dihydroxyacetone phosphate + NADPH + H(+). The protein operates within membrane lipid metabolism; glycerophospholipid metabolism. Functionally, catalyzes the reduction of the glycolytic intermediate dihydroxyacetone phosphate (DHAP) to sn-glycerol 3-phosphate (G3P), the key precursor for phospholipid synthesis. The polypeptide is Glycerol-3-phosphate dehydrogenase [NAD(P)+] (Leifsonia xyli subsp. xyli (strain CTCB07)).